The primary structure comprises 97 residues: YcgL domain-containing protein PA14_47450 (97 aa).

One can recognise a YcgL domain in the interval 3 to 87 (RICSVYKSPR…GEEEYIEHLP (85 aa)).

The polypeptide is YcgL domain-containing protein PA14_47450 (Pseudomonas aeruginosa (strain UCBPP-PA14)).